The sequence spans 450 residues: UDP-N-acetylmuramoylalanine--D-glutamate ligase (450 aa).

An ATP-binding site is contributed by 116 to 122 (GSNGKTT).

Belongs to the MurCDEF family.

The protein localises to the cytoplasm. It catalyses the reaction UDP-N-acetyl-alpha-D-muramoyl-L-alanine + D-glutamate + ATP = UDP-N-acetyl-alpha-D-muramoyl-L-alanyl-D-glutamate + ADP + phosphate + H(+). It functions in the pathway cell wall biogenesis; peptidoglycan biosynthesis. Cell wall formation. Catalyzes the addition of glutamate to the nucleotide precursor UDP-N-acetylmuramoyl-L-alanine (UMA). In Dechloromonas aromatica (strain RCB), this protein is UDP-N-acetylmuramoylalanine--D-glutamate ligase.